Here is a 275-residue protein sequence, read N- to C-terminus: Methyltransferase str2 (275 aa).

It belongs to the methyltransferase superfamily. LaeA methyltransferase family.

The protein operates within mycotoxin biosynthesis. Methyltransferase; part of the gene cluster that mediates the biosynthesis of strobilurin A, an antifungal polyketide that contains a key beta-methoxyacrylate toxophore that targets the complex III of the mitochondrial electron transport chain. Strobilurin biosynthesis begins with construction of benzoyl CoA by step-wise elimination of ammonia from phenylalanine by the phenylalanine ammonia-lyase str11, oxygenation by str8 and retro-Claisen reaction to form benzoic acid, which is activated to its CoA thiolester benzoyl CoA by the dedicated CoA ligase str10. Benzoyl CoA forms the starter unit for the highly reducing polyketide synthase stpks1 that produces the polyketide prestrobilutin A. The FAD-dependent oxygenase str9 then catalyzes the key oxidative rearrangement responsible for the creation of the beta-methoxyacrylate toxophore. Str9 performs epoxidation of the 2,3 olefin of prestrobilutin A, followed by Meinwald rearrangement to furnish the aldehyde intermediate. Rapid enolization of the aldehyde intermediate would give the beta-methoxyacrylate skeleton and methylations catalyzed by str2 and str3 complete the synthesis and lead to the production of strobilurin A. The short-chain dehydrogenase stl2 and the dehydrogenase str4 play a role in the shunt pathway leading to the production of bolineol. The cluster encodes no obvious halogenase gene that could be involved in production of strobilurin B, nor any obvious dimethylallyl-transferase that could be involved in the production of strobilurin G. It is possible that unknown proteins encoded in, or near, the cluster (such as str1 or stl1) may form new classes of halogenases or dimethylally-transferases, or that the responsible genes are located elsewhere on the genome. Similarly, proteins encoded by str5/str6 hydrolases appear to have no chemical role in the biosynthesis of strobilurin A. Finally, no obvious self-resistance gene is found within the cluster. The chain is Methyltransferase str2 from Strobilurus tenacellus.